The primary structure comprises 416 residues: UV excision repair protein RAD23 homolog B (416 aa).

The 79-residue stretch at 1 to 79 (MQVTLKTLQQ…VVVMVTKPKA (79 aa)) folds into the Ubiquitin-like domain. Positions 83–111 (AVPATTQPSSTPSPTAVSSSPAVAAAQAP) are enriched in low complexity. The interval 83 to 175 (AVPATTQPSS…STPGDSSRSN (93 aa)) is disordered. Residues 112–121 (APTPALPPTS) are compositionally biased toward pro residues. The span at 122-143 (TPASTAPASTTASSEPAPAGAT) shows a compositional bias: low complexity. At threonine 155 the chain carries Phosphothreonine. Phosphoserine is present on residues serine 160 and serine 174. Threonine 186 carries the post-translational modification Phosphothreonine. Residues 188–228 (QSYENMVTEIMSMGYEREQVIAALRASFNNPDRAVEYLLMG) form the UBA 1 domain. Position 199 is a phosphoserine (serine 199). Residue tyrosine 202 is modified to Phosphotyrosine. The region spanning 274–317 (HPLEFLRNQPQFQQMRQIIQQNPSLLPALLQQIGRENPQLLQQI) is the STI1 domain. Residues 333 to 356 (QEAGSQGGGGGGGGGGGGGGGGGI) form a disordered region. Over residues 337–356 (SQGGGGGGGGGGGGGGGGGI) the composition is skewed to gly residues. The 41-residue stretch at 371 to 411 (PQEKEAIERLKALGFPEGLVIQAYFACEKNENLAANFLLQQ) folds into the UBA 2 domain.

This sequence belongs to the RAD23 family. In terms of assembly, component of the XPC complex composed of XPC, RAD23B and CETN2. Interacts with NGLY1 and PSMC1. Interacts with ATXN3. Interacts with AMFR. Interacts with VCP; the interaction is indirect and mediated by NGLY1.

The protein resides in the nucleus. The protein localises to the cytoplasm. Functionally, multiubiquitin chain receptor involved in modulation of proteasomal degradation. Binds to polyubiquitin chains. Proposed to be capable to bind simultaneously to the 26S proteasome and to polyubiquitinated substrates and to deliver ubiquitinated proteins to the proteasome. May play a role in endoplasmic reticulum-associated degradation (ERAD) of misfolded glycoproteins by association with PNGase and delivering deglycosylated proteins to the proteasome. Its function is as follows. Involved in global genome nucleotide excision repair (GG-NER) by acting as component of the XPC complex. Cooperatively with Cetn2 appears to stabilize Xpc. May protect Xpc from proteasomal degradation. In terms of biological role, the XPC complex is proposed to represent the first factor bound at the sites of DNA damage and together with other core recognition factors, Xpa, RPA and the TFIIH complex, is part of the pre-incision (or initial recognition) complex. The XPC complex recognizes a wide spectrum of damaged DNA characterized by distortions of the DNA helix such as single-stranded loops, mismatched bubbles or single-stranded overhangs. The orientation of XPC complex binding appears to be crucial for inducing a productive NER. XPC complex is proposed to recognize and to interact with unpaired bases on the undamaged DNA strand which is followed by recruitment of the TFIIH complex and subsequent scanning for lesions in the opposite strand in a 5'-to-3' direction by the NER machinery. Cyclobutane pyrimidine dimers (CPDs) which are formed upon UV-induced DNA damage esacpe detection by the XPC complex due to a low degree of structural perurbation. Instead they are detected by the UV-DDB complex which in turn recruits and cooperates with the XPC complex in the respective DNA repair. In vitro, the Xpc:Rad23b dimer is sufficient to initiate NER; it preferentially binds to cisplatin and UV-damaged double-stranded DNA and also binds to a variety of chemically and structurally diverse DNA adducts. Xpc:Rad23b contacts DNA both 5' and 3' of a cisplatin lesion with a preference for the 5' side. Xpc:Rad23bB induces a bend in DNA upon binding. Xpc:Rad23b stimulates the activity of DNA glycosylases Tdg and Smug1. The chain is UV excision repair protein RAD23 homolog B (Rad23b) from Mus musculus (Mouse).